The chain runs to 284 residues: Bifunctional protein FolD (284 aa).

Residues 165–167, threonine 192, and valine 233 each bind NADP(+); that span reads GRG.

It belongs to the tetrahydrofolate dehydrogenase/cyclohydrolase family. In terms of assembly, homodimer.

The enzyme catalyses (6R)-5,10-methylene-5,6,7,8-tetrahydrofolate + NADP(+) = (6R)-5,10-methenyltetrahydrofolate + NADPH. It carries out the reaction (6R)-5,10-methenyltetrahydrofolate + H2O = (6R)-10-formyltetrahydrofolate + H(+). The protein operates within one-carbon metabolism; tetrahydrofolate interconversion. In terms of biological role, catalyzes the oxidation of 5,10-methylenetetrahydrofolate to 5,10-methenyltetrahydrofolate and then the hydrolysis of 5,10-methenyltetrahydrofolate to 10-formyltetrahydrofolate. The polypeptide is Bifunctional protein FolD (Corynebacterium glutamicum (strain R)).